The sequence spans 235 residues: MRIDIITCLPKLLDSFFGHSILKRAQEKGIAEVVVHDLRTYTLFKHKQVDDYSYGGSAGMVLMVEPIDRCITALKAEREYDAVIYMTPDGKTFDQQTANRFSLYKNIIILCGHYKGVDERARQAFITHEISIGDYVLSGGELAAAVVSDALIRLIPGVLSDETSALTDSFQDSLLAPAVYTRPADYKGMIVPEILLSGNEKEIEKWRFENALERTKERRPDLYQKFTKAYDADGK.

S-adenosyl-L-methionine is bound by residues G112 and 132–137; that span reads IGDYVL.

This sequence belongs to the RNA methyltransferase TrmD family. As to quaternary structure, homodimer.

The protein resides in the cytoplasm. It catalyses the reaction guanosine(37) in tRNA + S-adenosyl-L-methionine = N(1)-methylguanosine(37) in tRNA + S-adenosyl-L-homocysteine + H(+). Its function is as follows. Specifically methylates guanosine-37 in various tRNAs. This is tRNA (guanine-N(1)-)-methyltransferase from Cytophaga hutchinsonii (strain ATCC 33406 / DSM 1761 / CIP 103989 / NBRC 15051 / NCIMB 9469 / D465).